We begin with the raw amino-acid sequence, 215 residues long: Small ribosomal subunit protein eS1 (215 aa).

Belongs to the eukaryotic ribosomal protein eS1 family.

The polypeptide is Small ribosomal subunit protein eS1 (Thermoplasma volcanium (strain ATCC 51530 / DSM 4299 / JCM 9571 / NBRC 15438 / GSS1)).